A 255-amino-acid chain; its full sequence is Hydroxyacylglutathione hydrolase (255 aa).

Positions 55, 57, 59, 60, 113, 132, and 170 each coordinate Zn(2+).

Belongs to the metallo-beta-lactamase superfamily. Glyoxalase II family. As to quaternary structure, monomer. Zn(2+) is required as a cofactor.

The catalysed reaction is an S-(2-hydroxyacyl)glutathione + H2O = a 2-hydroxy carboxylate + glutathione + H(+). It functions in the pathway secondary metabolite metabolism; methylglyoxal degradation; (R)-lactate from methylglyoxal: step 2/2. Its function is as follows. Thiolesterase that catalyzes the hydrolysis of S-D-lactoyl-glutathione to form glutathione and D-lactic acid. In Methylobacterium sp. (strain 4-46), this protein is Hydroxyacylglutathione hydrolase.